The primary structure comprises 285 residues: N(G),N(G)-dimethylarginine dimethylaminohydrolase 1 (285 aa).

Alanine 2 bears the N-acetylalanine mark. Leucine 30 contacts substrate. Serine 33 is modified (phosphoserine). Aspartate 73, glutamate 78, aspartate 79, arginine 98, and arginine 145 together coordinate substrate. The Proton donor role is filled by histidine 173. Cysteine 222 is subject to S-nitrosocysteine. Valine 268 lines the substrate pocket. Residue cysteine 274 is modified to S-nitrosocysteine. Cysteine 274 (nucleophile) is an active-site residue. Cysteine 274 is a Zn(2+) binding site.

It belongs to the DDAH family. As to quaternary structure, monomer. As to expression, detected in red blood cells (at protein level). Widely distributed, high amounts found in kidney, brain, aorta and pancreas.

The enzyme catalyses N(omega),N(omega)-dimethyl-L-arginine + H2O = dimethylamine + L-citrulline. The catalysed reaction is N(omega)-methyl-L-arginine + H2O = L-citrulline + methylamine. Its activity is regulated as follows. Inhibited by zinc ions. Hydrolyzes N(G),N(G)-dimethyl-L-arginine (ADMA) and N(G)-monomethyl-L-arginine (MMA) which act as inhibitors of NOS. Has therefore a role in the regulation of nitric oxide generation. The chain is N(G),N(G)-dimethylarginine dimethylaminohydrolase 1 (Ddah1) from Rattus norvegicus (Rat).